We begin with the raw amino-acid sequence, 207 residues long: MPQRKISFYRLLPLATLLLAACSTTPPSGPATSPTSPQWRQHEQQLRQLSQFQTRGAFAYLSEKQKVYARFFWQQTAPERYRLLLTNPLGSTELELVVQPGVTQLTDNQGKRHVSNDPQEMIQKLTGMSIPLESLRQWILGLPGDTTDFTLDDKYRLKQLTYQQDGVTWVVDYQEYNTQVTPALPSRMELSQGGQRIKLKMDNWTVK.

The first 21 residues, methionine 1–alanine 21, serve as a signal peptide directing secretion. Residue cysteine 22 is the site of N-palmitoyl cysteine attachment. Cysteine 22 carries the S-diacylglycerol cysteine lipid modification.

It belongs to the LolB family. As to quaternary structure, monomer.

It is found in the cell outer membrane. Its function is as follows. Plays a critical role in the incorporation of lipoproteins in the outer membrane after they are released by the LolA protein. This chain is Outer-membrane lipoprotein LolB, found in Yersinia enterocolitica serotype O:8 / biotype 1B (strain NCTC 13174 / 8081).